A 265-amino-acid polypeptide reads, in one-letter code: Bradykinin-potentiating and C-type natriuretic peptides (265 aa).

Residues 1–23 (MVLSRLAASGLLLLALLALSVDG) form the signal peptide. Positions 24–30 (KPVQQWA) are excised as a propeptide. Pyrrolidone carboxylic acid is present on Q31. The propeptide occupies 44 to 50 (LKVQQWA). Q51 carries the pyrrolidone carboxylic acid modification. A propeptide spanning residues 64–70 (LTVQQWA) is cleaved from the precursor. Q71 is subject to Pyrrolidone carboxylic acid. Positions 81–87 (LTVQQWA) are excised as a propeptide. Q88 carries the post-translational modification Pyrrolidone carboxylic acid. Residues 100–106 (LEVQQWA) constitute a propeptide that is removed on maturation. Q107 carries the pyrrolidone carboxylic acid modification. A propeptide spanning residues 118–120 (APL) is cleaved from the precursor. A Pyrrolidone carboxylic acid modification is found at Q121. V126 is a propeptide. Residue Q127 is modified to Pyrrolidone carboxylic acid. The propeptide occupies 132-241 (LLQPHESPAS…GGARRLKGLA (110 aa)). The interval 153 to 211 (GPEAASGVPSAGAEVGRSGSKAPAAPHRLSKSKGAAATSAASRPMRDLRPDGKQARQNW) is disordered. A compositionally biased stretch (low complexity) spans 184 to 194 (SKGAAATSAAS). Residues 196 to 206 (PMRDLRPDGKQ) are compositionally biased toward basic and acidic residues. A disulfide bond links C249 and C265.

In the N-terminal section; belongs to the bradykinin-potentiating peptide family. It in the C-terminal section; belongs to the natriuretic peptide family. In terms of tissue distribution, expressed by the venom gland.

The protein localises to the secreted. Its subcellular location is the cytoplasm. It localises to the cytosol. Functionally, modestly inhibits ACE (with highest affinity for the N-site) and reveals strong bradykinin-potentiating activity. Induces nitric oxide (NO) production depended on muscarinic acetylcholine receptor M1 subtype (CHRM1) and bradykinin B2 receptor (BDKRB2) activation. Both these receptors contribute to the vasodilation induced by this peptide that may have an indirect action on BDKRB2 and a direct agonistic action on CHRM1. Peptide with several activities. It inhibits the activity of the angiotensin-converting enzyme (ACE) by a preferential interaction with its C-domain. It evokes transient hypotension (-14 mmHg) similar to that evoked by 0.5 ug of bradykinin, when injected alone into rats. It has a high bradykinin-potentiating effect (120%), when 60 nmol of BPP-10c are coinjected with 0.5 ug of bradykinin into rats. Does not affect angiotensin-1 pressor effects. Shows potent and long-lasting antihypertensive activity as well as a reduction of the heart rate. It also binds and dose-dependently promotes the activation of cytosolic argininosuccinate synthase (ASS1), an enzyme that catalyzes the conversion of citrulline, L-aspartate and ATP to argininosuccinate, AMP and pyrophosphate. It also enhances ASS1-dependent arginine production in HEK 293 cells, as well as in spontaneous hypertensive rat (SHR) and Wistar rat plasma. In addition, it induces the production of nitric-oxide (NO) by HUVEC cells via the endothelial nitric-oxide synthase (NOS3), which use arginine as a substrate and produce NO. It has been shown to be internalized by ASS1-expressing endothelial (HUVEC) and kidney (HEK 293) cells, and is detected homogenously distributed within the cell cytoplasm for up to 2 hours. Its function is as follows. has a vasorelaxant activity in rat aortic strips and a diuretic potency in anesthetized rats. May act by activating natriuretic receptors (NPR1 and/or NPR2). This chain is Bradykinin-potentiating and C-type natriuretic peptides, found in Bothrops insularis (Golden lancehead).